The following is a 252-amino-acid chain: Hydroxyacylglutathione hydrolase (252 aa).

7 residues coordinate Zn(2+): His54, His56, Asp58, His59, His111, Asp128, and His166.

It belongs to the metallo-beta-lactamase superfamily. Glyoxalase II family. As to quaternary structure, monomer. Zn(2+) is required as a cofactor.

It catalyses the reaction an S-(2-hydroxyacyl)glutathione + H2O = a 2-hydroxy carboxylate + glutathione + H(+). It functions in the pathway secondary metabolite metabolism; methylglyoxal degradation; (R)-lactate from methylglyoxal: step 2/2. Its function is as follows. Thiolesterase that catalyzes the hydrolysis of S-D-lactoyl-glutathione to form glutathione and D-lactic acid. This chain is Hydroxyacylglutathione hydrolase, found in Aliivibrio fischeri (strain MJ11) (Vibrio fischeri).